A 254-amino-acid polypeptide reads, in one-letter code: Probable transcriptional regulatory protein Saro_0419 (254 aa).

Over residues 1–14 (MAGHSKFKNIMHRK) the composition is skewed to basic residues. The tract at residues 1-22 (MAGHSKFKNIMHRKGAQDKKRS) is disordered.

Belongs to the TACO1 family.

It is found in the cytoplasm. The chain is Probable transcriptional regulatory protein Saro_0419 from Novosphingobium aromaticivorans (strain ATCC 700278 / DSM 12444 / CCUG 56034 / CIP 105152 / NBRC 16084 / F199).